Here is a 273-residue protein sequence, read N- to C-terminus: Cell division protein FtsQ (273 aa).

Residues 1–10 (MWNDARTINL) lie on the Cytoplasmic side of the membrane. Residues 11-31 (IANTLAVLAVAAMLLAGVAWV) traverse the membrane as a helical segment. The Periplasmic segment spans residues 32–273 (AQRPYFTLAA…HSKSKPAKKR (242 aa)). A POTRA domain is found at 37-110 (FTLAAIEIES…NTLRVRVEEQ (74 aa)).

The protein belongs to the FtsQ/DivIB family. FtsQ subfamily. As to quaternary structure, part of a complex composed of FtsB, FtsL and FtsQ.

The protein localises to the cell inner membrane. In terms of biological role, essential cell division protein. May link together the upstream cell division proteins, which are predominantly cytoplasmic, with the downstream cell division proteins, which are predominantly periplasmic. May control correct divisome assembly. This chain is Cell division protein FtsQ, found in Bordetella pertussis (strain Tohama I / ATCC BAA-589 / NCTC 13251).